The sequence spans 106 residues: UPF0060 membrane protein RHE_CH01408 (106 aa).

Helical transmembrane passes span I4–L24, A30–V50, F59–G79, and D86–A106.

The protein belongs to the UPF0060 family.

It is found in the cell inner membrane. This chain is UPF0060 membrane protein RHE_CH01408, found in Rhizobium etli (strain ATCC 51251 / DSM 11541 / JCM 21823 / NBRC 15573 / CFN 42).